Consider the following 163-residue polypeptide: MKAKGSVFRYGDNVDTDVIIPARFLNTSDPLELAAHCMEDIDADFSSKVNAGDIIVADDNFGCGSSREHAPISIKASGVSCVIANSFARIFYRNAINIGLPILECPEAVAVIEAGDEVEVDFDSGVITDVTKGQSFQGQAFPEFMQTLIAAGGLVNYINATEK.

The protein belongs to the LeuD family. LeuD type 2 subfamily. Heterodimer of a large and a small subunit.

It catalyses the reaction (2R,3S)-2,3-dimethylmalate = dimethylmaleate + H2O. It functions in the pathway cofactor degradation; nicotinate degradation; propanoate and pyruvate from 6-hydroxynicotinate: step 7/8. This Eubacterium barkeri (Clostridium barkeri) protein is 2,3-dimethylmalate dehydratase small subunit.